The following is a 369-amino-acid chain: Glycine oxidase (369 aa).

Residues 14–15, 34–35, 42–43, 47–49, and V174 each bind FAD; these read II, ES, AT, and AGM. Residues R302 and R329 each contribute to the substrate site. Residue 327–333 coordinates FAD; that stretch reads HFRNGIL.

It belongs to the DAO family. ThiO subfamily. In terms of assembly, homotetramer. FAD is required as a cofactor.

The catalysed reaction is glycine + O2 + H2O = glyoxylate + H2O2 + NH4(+). It catalyses the reaction glyphosate + O2 + H2O = aminomethylphosphonate + glyoxylate + H2O2 + H(+). It carries out the reaction N-ethylglycine + O2 + H2O = ethylamine + glyoxylate + H2O2. The enzyme catalyses sarcosine + O2 + H2O = methylamine + glyoxylate + H2O2. The catalysed reaction is D-alanine + O2 + H2O = pyruvate + H2O2 + NH4(+). It participates in cofactor biosynthesis; thiamine diphosphate biosynthesis. Functionally, catalyzes the FAD-dependent oxidative deamination of glycine, leading to glyoxylate, ammonia and hydrogen peroxide. Is also able to act on various amines and D-amino acids to yield the corresponding alpha-keto acids, ammonia/amine, and hydrogen peroxide. Can also oxidize the herbicide glyphosate (N-phosphonomethylglycine), and thus may be involved in the degradation pathway that allows B.licheniformis J33-8 to grow with glyphosate as the sole source of carbon. Is essential for thiamine biosynthesis since the oxidation of glycine catalyzed by ThiO generates the glycine imine intermediate (dehydroglycine) required for the biosynthesis of the thiazole ring of thiamine pyrophosphate. The protein is Glycine oxidase of Bacillus licheniformis.